Here is a 218-residue protein sequence, read N- to C-terminus: uncharacterized protein (218 aa).

This sequence belongs to the glycosyltransferase 2 family.

This is an uncharacterized protein from Mycobacterium bovis (strain ATCC BAA-935 / AF2122/97).